The chain runs to 452 residues: PHO85 cyclin CLG1 (452 aa).

Belongs to the cyclin family. PCL1,2 subfamily. In terms of assembly, forms a cyclin-CDK complex with PHO85.

Cyclin partner of the cyclin-dependent kinase (CDK) PHO85. Has a role in cell integrity and polarized cell growth together with the other PCL1/PCL2 cyclin family members. In Saccharomyces cerevisiae (strain ATCC 204508 / S288c) (Baker's yeast), this protein is PHO85 cyclin CLG1 (CLG1).